The primary structure comprises 968 residues: Ribonuclease E (968 aa).

The S1 motif domain maps to 39–119 (SNIYKGKITR…GTKGAALTTF (81 aa)). Residues D303 and D346 each coordinate Mg(2+). Zn(2+) is bound by residues C404 and C407. Positions 404-407 (CPRC) are required for zinc-mediated homotetramerization and catalytic activity. The tract at residues 947–968 (IKNSAGAHSATNFSTSPVKKSE) is disordered. Residues 955–968 (SATNFSTSPVKKSE) show a composition bias toward polar residues.

The protein belongs to the RNase E/G family. RNase E subfamily. As to quaternary structure, component of the RNA degradosome, which is a multiprotein complex involved in RNA processing and mRNA degradation. Within the RNA degradosome, RNase E assembles into a homotetramer formed by a dimer of dimers. It depends on Zn(2+) as a cofactor. Mg(2+) is required as a cofactor.

The protein localises to the cytoplasm. The protein resides in the cell inner membrane. It catalyses the reaction Endonucleolytic cleavage of single-stranded RNA in A- and U-rich regions.. Endoribonuclease that plays a central role in RNA processing and decay. Required for the maturation of 5S and 16S rRNAs and the majority of tRNAs. Also involved in the degradation of most mRNAs. In Buchnera aphidicola subsp. Schizaphis graminum (strain Sg), this protein is Ribonuclease E.